Here is a 252-residue protein sequence, read N- to C-terminus: 5'-nucleotidase SurE (252 aa).

Positions 8, 9, 39, and 96 each coordinate a divalent metal cation.

It belongs to the SurE nucleotidase family. Requires a divalent metal cation as cofactor.

It is found in the cytoplasm. The enzyme catalyses a ribonucleoside 5'-phosphate + H2O = a ribonucleoside + phosphate. Its function is as follows. Nucleotidase that shows phosphatase activity on nucleoside 5'-monophosphates. The polypeptide is 5'-nucleotidase SurE (Petrotoga mobilis (strain DSM 10674 / SJ95)).